Here is a 324-residue protein sequence, read N- to C-terminus: tRNA uridine(34) hydroxylase (324 aa).

The Rhodanese domain occupies 145–239 (NDKKTIFIDM…YVHDARKNGL (95 aa)). Cysteine 199 acts as the Cysteine persulfide intermediate in catalysis.

Belongs to the TrhO family.

The enzyme catalyses uridine(34) in tRNA + AH2 + O2 = 5-hydroxyuridine(34) in tRNA + A + H2O. Catalyzes oxygen-dependent 5-hydroxyuridine (ho5U) modification at position 34 in tRNAs. The protein is tRNA uridine(34) hydroxylase of Buchnera aphidicola subsp. Acyrthosiphon pisum (strain APS) (Acyrthosiphon pisum symbiotic bacterium).